Consider the following 112-residue polypeptide: uncharacterized protein (112 aa).

The transit peptide at 1 to 21 (MYLSAQLMRTVTASHLTLRAL) directs the protein to the mitochondrion.

It is found in the mitochondrion. This is an uncharacterized protein from Saccharomyces cerevisiae (strain ATCC 204508 / S288c) (Baker's yeast).